A 338-amino-acid chain; its full sequence is Glycerol-3-phosphate dehydrogenase [NAD(P)+] (338 aa).

Serine 13, tryptophan 14, and lysine 108 together coordinate NADPH. The sn-glycerol 3-phosphate site is built by lysine 108, glycine 139, and serine 141. Residue alanine 143 participates in NADPH binding. 5 residues coordinate sn-glycerol 3-phosphate: lysine 194, aspartate 247, serine 257, arginine 258, and asparagine 259. Lysine 194 (proton acceptor) is an active-site residue. Residue arginine 258 participates in NADPH binding. The NADPH site is built by valine 282 and glutamate 284.

The protein belongs to the NAD-dependent glycerol-3-phosphate dehydrogenase family.

The protein localises to the cytoplasm. It carries out the reaction sn-glycerol 3-phosphate + NAD(+) = dihydroxyacetone phosphate + NADH + H(+). The enzyme catalyses sn-glycerol 3-phosphate + NADP(+) = dihydroxyacetone phosphate + NADPH + H(+). Its pathway is membrane lipid metabolism; glycerophospholipid metabolism. In terms of biological role, catalyzes the reduction of the glycolytic intermediate dihydroxyacetone phosphate (DHAP) to sn-glycerol 3-phosphate (G3P), the key precursor for phospholipid synthesis. The sequence is that of Glycerol-3-phosphate dehydrogenase [NAD(P)+] from Streptococcus pneumoniae (strain CGSP14).